The following is a 248-amino-acid chain: Adenosylcobinamide-GDP ribazoletransferase (248 aa).

A run of 6 helical transmembrane segments spans residues 28–48, 103–123, 126–146, 169–189, 193–213, and 225–245; these read LFWFPVVGLFLGLLQAGAGYL, VGSFGAIGLILLFLFKSIVLV, LAFGLYPWIVSGVLLARLVQV, AGIQHFVAAFLVALFILLLLM, MLPSGIGLSAAIAGAVLMSLL, and VLGASSEFTEVLVWVSGVFLA.

Belongs to the CobS family. It depends on Mg(2+) as a cofactor.

It localises to the cell inner membrane. The catalysed reaction is alpha-ribazole + adenosylcob(III)inamide-GDP = adenosylcob(III)alamin + GMP + H(+). The enzyme catalyses alpha-ribazole 5'-phosphate + adenosylcob(III)inamide-GDP = adenosylcob(III)alamin 5'-phosphate + GMP + H(+). The protein operates within cofactor biosynthesis; adenosylcobalamin biosynthesis; adenosylcobalamin from cob(II)yrinate a,c-diamide: step 7/7. Functionally, joins adenosylcobinamide-GDP and alpha-ribazole to generate adenosylcobalamin (Ado-cobalamin). Also synthesizes adenosylcobalamin 5'-phosphate from adenosylcobinamide-GDP and alpha-ribazole 5'-phosphate. The chain is Adenosylcobinamide-GDP ribazoletransferase from Chlorobium phaeobacteroides (strain BS1).